We begin with the raw amino-acid sequence, 20 residues long: T cell receptor alpha joining 3 (20 aa).

Alpha-beta TR is a heterodimer composed of an alpha and beta chain; disulfide-linked. The alpha-beta TR is associated with the transmembrane signaling CD3 coreceptor proteins to form the TR-CD3 (TcR or TCR). The assembly of alpha-beta TR heterodimers with CD3 occurs in the endoplasmic reticulum where a single alpha-beta TR heterodimer associates with one CD3D-CD3E heterodimer, one CD3G-CD3E heterodimer and one CD247 homodimer forming a stable octameric structure. CD3D-CD3E and CD3G-CD3E heterodimers preferentially associate with TR alpha and TR beta chains, respectively. The association of the CD247 homodimer is the last step of TcR assembly in the endoplasmic reticulum and is required for transport to the cell surface.

It localises to the cell membrane. In terms of biological role, j region of the variable domain of T cell receptor (TR) alpha chain that participates in the antigen recognition. Alpha-beta T cell receptors are antigen specific receptors which are essential to the immune response and are present on the cell surface of T lymphocytes. Recognize peptide-major histocompatibility (MH) (pMH) complexes that are displayed by antigen presenting cells (APC), a prerequisite for efficient T cell adaptive immunity against pathogens. Binding of alpha-beta TR to pMH complex initiates TR-CD3 clustering on the cell surface and intracellular activation of LCK that phosphorylates the ITAM motifs of CD3G, CD3D, CD3E and CD247 enabling the recruitment of ZAP70. In turn ZAP70 phosphorylates LAT, which recruits numerous signaling molecules to form the LAT signalosome. The LAT signalosome propagates signal branching to three major signaling pathways, the calcium, the mitogen-activated protein kinase (MAPK) kinase and the nuclear factor NF-kappa-B (NF-kB) pathways, leading to the mobilization of transcription factors that are critical for gene expression and essential for T cell growth and differentiation. The T cell repertoire is generated in the thymus, by V-(D)-J rearrangement. This repertoire is then shaped by intrathymic selection events to generate a peripheral T cell pool of self-MH restricted, non-autoaggressive T cells. Post-thymic interaction of alpha-beta TR with the pMH complexes shapes TR structural and functional avidity. This Homo sapiens (Human) protein is T cell receptor alpha joining 3.